We begin with the raw amino-acid sequence, 263 residues long: MTESEVSTPTVAPPVISLADNADTIKLYSKYIVPENTPFKTTDKQTLMDNCAFFAKMFVNLSAMAFSTLEPLDKKETKELSKKEKKQLKKEKKALKKENKGGKDKKDKKDKKDKKDKKDKKDKKDKGDKKDKKEKKEKKHDDDKSEVKEKKEKKEKEDRTIVEIRNTKSILDASSTSVSRFAPCMMFVNCPSGPAGLECRILKDTSIAKLKSEICWNQYLTNLVQCQERGLSKCFSKFVDLQKTCKQTEIPKKSFSLFDSLSY.

Positions 72 to 168 form a coiled coil; it reads LDKKETKELS…RTIVEIRNTK (97 aa). The disordered stretch occupies residues 76–158; the sequence is ETKELSKKEK…EKKEKKEKED (83 aa). The span at 83–95 shows a compositional bias: basic residues; that stretch reads KEKKQLKKEKKAL. Positions 96–107 are enriched in basic and acidic residues; that stretch reads KKENKGGKDKKD. The segment covering 108 to 121 has biased composition (basic residues); that stretch reads KKDKKDKKDKKDKK. 2 stretches are compositionally biased toward basic and acidic residues: residues 122–131 and 139–158; these read DKKDKGDKKD and KHDD…EKED.

This is an uncharacterized protein from Dictyostelium discoideum (Social amoeba).